Consider the following 497-residue polypeptide: Histidine--tRNA ligase (497 aa).

This sequence belongs to the class-II aminoacyl-tRNA synthetase family. In terms of assembly, homodimer.

The protein resides in the cytoplasm. It carries out the reaction tRNA(His) + L-histidine + ATP = L-histidyl-tRNA(His) + AMP + diphosphate + H(+). The sequence is that of Histidine--tRNA ligase from Dinoroseobacter shibae (strain DSM 16493 / NCIMB 14021 / DFL 12).